The chain runs to 359 residues: Peptide chain release factor 1 (359 aa).

Position 234 is an N5-methylglutamine (Q234). Residues 283 to 305 (SQKDAARAADRRAQVGSGDRSER) form a disordered region.

This sequence belongs to the prokaryotic/mitochondrial release factor family. Post-translationally, methylated by PrmC. Methylation increases the termination efficiency of RF1.

The protein localises to the cytoplasm. Functionally, peptide chain release factor 1 directs the termination of translation in response to the peptide chain termination codons UAG and UAA. The protein is Peptide chain release factor 1 of Methylobacterium sp. (strain 4-46).